The primary structure comprises 331 residues: Aspartate carbamoyltransferase catalytic subunit (331 aa).

Positions 76 and 77 each coordinate carbamoyl phosphate. Residue Lys-104 participates in L-aspartate binding. Carbamoyl phosphate-binding residues include Arg-126, His-154, and Gln-157. Residues Arg-187 and Arg-246 each contribute to the L-aspartate site. Carbamoyl phosphate-binding residues include Gly-287 and Pro-288.

This sequence belongs to the aspartate/ornithine carbamoyltransferase superfamily. ATCase family. In terms of assembly, heterododecamer (2C3:3R2) of six catalytic PyrB chains organized as two trimers (C3), and six regulatory PyrI chains organized as three dimers (R2).

The catalysed reaction is carbamoyl phosphate + L-aspartate = N-carbamoyl-L-aspartate + phosphate + H(+). It functions in the pathway pyrimidine metabolism; UMP biosynthesis via de novo pathway; (S)-dihydroorotate from bicarbonate: step 2/3. Catalyzes the condensation of carbamoyl phosphate and aspartate to form carbamoyl aspartate and inorganic phosphate, the committed step in the de novo pyrimidine nucleotide biosynthesis pathway. This Dehalococcoides mccartyi (strain ATCC BAA-2100 / JCM 16839 / KCTC 5957 / BAV1) protein is Aspartate carbamoyltransferase catalytic subunit.